Consider the following 550-residue polypeptide: Methyl-accepting chemotaxis protein PcaY (550 aa).

The Cytoplasmic portion of the chain corresponds to 1 to 19 (MVPTRSTARMLANLKIRTG). Residues 20 to 40 (MFWVLSLFSLTLLFSTASAWW) form a helical membrane-spanning segment. At 41–198 (AALGSDQQIT…ESDRRLARAQ (158 aa)) the chain is on the periplasmic side. The ligand-binding domain stretch occupies residues 44–196 (GSDQQITELD…MLESDRRLAR (153 aa)). Residues R71 and N75 each contribute to the benzoate site. The salicylate site is built by R71, N75, and Y135. 71-78 (RSSANVSS) is a 3,4-dihydroxybenzoate binding site. L-quinate is bound by residues 71–78 (RSSANVSS), Y135, Q142, and N158. 3,4-dihydroxybenzoate is bound at residue Q169. Residues 199 to 219 (LLSLCLLGVTVVLAVLCWAFI) traverse the membrane as a helical segment. The Cytoplasmic portion of the chain corresponds to 220–550 (AQRVLHPLRE…MTALVGRFKV (331 aa)). Residues 221–273 (QRVLHPLREAGGHFRRIASGDLSVPVQGQGNNEIGQLFHELQRMQQSQRDTLG) form the HAMP domain. In terms of domain architecture, Methyl-accepting transducer spans 278 to 514 (CARQLDAAAT…EVDRNLLNIR (237 aa)).

It belongs to the methyl-accepting chemotaxis (MCP) protein family. Ligand free PcaY_PP-ligand-binding domain (LBD) is present in a monomer-dimer equilibrium. Only the dimeric LBD is able to bind ligands which in turn causes dimer stabilization.

The protein localises to the cell inner membrane. Functionally, chemotactic-signal transducers respond to changes in the concentration of attractants and repellents in the environment, transduce a signal from the outside to the inside of the cell, and facilitate sensory adaptation through the variation of the level of methylation. PcaY recognizes a wide range of compounds containing a C6-membered ring with a carboxylate group. Binds preferentially compounds that serve as carbon sources and among them those that rapidly promote growth. Tightest binding compounds are quinate, shikimate, 3-dehydroshikimate and protocatechuate, which are at the interception of the biosynthetic shikimate and catabolic quinate pathways. The sequence is that of Methyl-accepting chemotaxis protein PcaY from Pseudomonas putida (strain ATCC 47054 / DSM 6125 / CFBP 8728 / NCIMB 11950 / KT2440).